The chain runs to 95 residues: Protein translocase subunit SecE (95 aa).

Positions 1–35 (MTDAVGSIDMPDAEDEAPESKKKSRKGGKRGKKGP) are disordered. A compositionally biased stretch (basic residues) spans 22–35 (KKSRKGGKRGKKGP). The chain crosses the membrane as a helical span at residues 67-87 (VVIVFVVVMIGLVTVLDIGFA).

This sequence belongs to the SecE/SEC61-gamma family. In terms of assembly, component of the Sec protein translocase complex. Heterotrimer consisting of SecY, SecE and SecG subunits. The heterotrimers can form oligomers, although 1 heterotrimer is thought to be able to translocate proteins. Interacts with the ribosome. Interacts with SecDF, and other proteins may be involved. Interacts with SecA.

The protein localises to the cell membrane. Functionally, essential subunit of the Sec protein translocation channel SecYEG. Clamps together the 2 halves of SecY. May contact the channel plug during translocation. The sequence is that of Protein translocase subunit SecE from Streptomyces griseus.